The sequence spans 259 residues: Imidazole glycerol phosphate synthase subunit HisF (259 aa).

Catalysis depends on residues Asp11 and Asp130.

The protein belongs to the HisA/HisF family. In terms of assembly, heterodimer of HisH and HisF.

Its subcellular location is the cytoplasm. The enzyme catalyses 5-[(5-phospho-1-deoxy-D-ribulos-1-ylimino)methylamino]-1-(5-phospho-beta-D-ribosyl)imidazole-4-carboxamide + L-glutamine = D-erythro-1-(imidazol-4-yl)glycerol 3-phosphate + 5-amino-1-(5-phospho-beta-D-ribosyl)imidazole-4-carboxamide + L-glutamate + H(+). It functions in the pathway amino-acid biosynthesis; L-histidine biosynthesis; L-histidine from 5-phospho-alpha-D-ribose 1-diphosphate: step 5/9. Functionally, IGPS catalyzes the conversion of PRFAR and glutamine to IGP, AICAR and glutamate. The HisF subunit catalyzes the cyclization activity that produces IGP and AICAR from PRFAR using the ammonia provided by the HisH subunit. The sequence is that of Imidazole glycerol phosphate synthase subunit HisF from Lactococcus lactis subsp. cremoris (strain SK11).